The sequence spans 607 residues: Elongation factor 4 (607 aa).

The region spanning G11–T193 is the tr-type G domain. GTP contacts are provided by residues D23 to T28 and N140 to D143.

This sequence belongs to the TRAFAC class translation factor GTPase superfamily. Classic translation factor GTPase family. LepA subfamily.

The protein localises to the cell membrane. The enzyme catalyses GTP + H2O = GDP + phosphate + H(+). Required for accurate and efficient protein synthesis under certain stress conditions. May act as a fidelity factor of the translation reaction, by catalyzing a one-codon backward translocation of tRNAs on improperly translocated ribosomes. Back-translocation proceeds from a post-translocation (POST) complex to a pre-translocation (PRE) complex, thus giving elongation factor G a second chance to translocate the tRNAs correctly. Binds to ribosomes in a GTP-dependent manner. This Streptococcus pneumoniae (strain JJA) protein is Elongation factor 4.